A 370-amino-acid polypeptide reads, in one-letter code: Histidinol-phosphate aminotransferase 1 (370 aa).

The residue at position 222 (K222) is an N6-(pyridoxal phosphate)lysine.

The protein belongs to the class-II pyridoxal-phosphate-dependent aminotransferase family. Histidinol-phosphate aminotransferase subfamily. In terms of assembly, homodimer. It depends on pyridoxal 5'-phosphate as a cofactor.

It carries out the reaction L-histidinol phosphate + 2-oxoglutarate = 3-(imidazol-4-yl)-2-oxopropyl phosphate + L-glutamate. The protein operates within amino-acid biosynthesis; L-histidine biosynthesis; L-histidine from 5-phospho-alpha-D-ribose 1-diphosphate: step 7/9. The chain is Histidinol-phosphate aminotransferase 1 from Bacillus cereus (strain ATCC 10987 / NRS 248).